We begin with the raw amino-acid sequence, 862 residues long: Protein translocase subunit SecA (862 aa).

Residues Q88, 106 to 110 (GEGKT), and D506 each bind ATP. Zn(2+) is bound by residues C839, C841, C850, and H851.

The protein belongs to the SecA family. Monomer and homodimer. Part of the essential Sec protein translocation apparatus which comprises SecA, SecYEG and auxiliary proteins SecDF-YajC and YidC. Zn(2+) is required as a cofactor.

Its subcellular location is the cell inner membrane. It localises to the cytoplasm. The catalysed reaction is ATP + H2O + cellular proteinSide 1 = ADP + phosphate + cellular proteinSide 2.. Its function is as follows. Part of the Sec protein translocase complex. Interacts with the SecYEG preprotein conducting channel. Has a central role in coupling the hydrolysis of ATP to the transfer of proteins into and across the cell membrane, serving as an ATP-driven molecular motor driving the stepwise translocation of polypeptide chains across the membrane. This chain is Protein translocase subunit SecA, found in Campylobacter jejuni (strain RM1221).